We begin with the raw amino-acid sequence, 66 residues long: Large ribosomal subunit protein bL35 (66 aa).

The span at 1-16 (MPKQKTHRASAKRFKR) shows a compositional bias: basic residues. A disordered region spans residues 1–22 (MPKQKTHRASAKRFKRTGSGGL).

It belongs to the bacterial ribosomal protein bL35 family.

This chain is Large ribosomal subunit protein bL35, found in Streptococcus suis (strain 05ZYH33).